The sequence spans 88 residues: Translation initiation factor IF-1 3 (88 aa).

Residues 1–72 (MAKEELLELD…TKGCINFRHK (72 aa)) form the S1-like domain.

This sequence belongs to the IF-1 family. As to quaternary structure, component of the 30S ribosomal translation pre-initiation complex which assembles on the 30S ribosome in the order IF-2 and IF-3, IF-1 and N-formylmethionyl-tRNA(fMet); mRNA recruitment can occur at any time during PIC assembly.

Its subcellular location is the cytoplasm. One of the essential components for the initiation of protein synthesis. Stabilizes the binding of IF-2 and IF-3 on the 30S subunit to which N-formylmethionyl-tRNA(fMet) subsequently binds. Helps modulate mRNA selection, yielding the 30S pre-initiation complex (PIC). Upon addition of the 50S ribosomal subunit IF-1, IF-2 and IF-3 are released leaving the mature 70S translation initiation complex. This Burkholderia orbicola (strain AU 1054) protein is Translation initiation factor IF-1 3.